Consider the following 297-residue polypeptide: Translocase of chloroplast 33, chloroplastic (297 aa).

In terms of domain architecture, AIG1-type G spans 34–258; it reads MNSMTVLVLG…HVDKKMVDGS (225 aa). A helical transmembrane segment spans residues 37–53; it reads MTVLVLGKGGVGKSSTV. GTP-binding positions include 46-51 and 65-70; these read GVGKSS and SPFQAE. Ser50 and Gln68 together coordinate Mg(2+). 2 homodimerization regions span residues 65–68 and 125–130; these read SPFQ and RLDVYR. A GTP-binding site is contributed by His160. Ser181 bears the Phosphoserine mark. 208–209 contacts GTP; the sequence is EN.

It belongs to the TRAFAC class TrmE-Era-EngA-EngB-Septin-like GTPase superfamily. AIG1/Toc34/Toc159-like paraseptin GTPase family. TOC34 subfamily. In terms of assembly, homodimer, heterodimer with TOC34 and TOC159, and monomer. The homodimerization and the dimerization with TOC159 require the binding of GTP on Arg-130, and a hypothetical coGAP factor. The dimeric form has a higher GTPase activity than the monomeric form. Part of the TOC core complex that includes 1 protein for the specific recognition of transit peptides surrounded by a ring composed of four proteins forming translocation channels, and four to five GTP-binding proteins providing energy. This core complex can interact with components of the TIC complex to form a larger import complex. Chloroplastic protein precursor such as prSS (precursor of the RuBisCO small subunit) interacts with these complexes. The TOC complex contains a specific subset of polar lipids such as digalactosyldiacylglyceride (DGDG), phosphatidylcholine (PC) and phosphatidylglycerol (PG). Interacts at least with TOC75-3. Forms large complexes including TOC33, pPORA and OEP161 during pPORA import into plastids at the plastid envelope membrane. Interacts with SP1. Mg(2+) serves as cofactor. Post-translationally, phosphorylated by a kinase present in the outer envelope of chloroplast. When Ser-181 is phosphorylated, the binding to preprotein, GTP and GDP is inhibited, and thus, GTPase activity is repressed. Mostly expressed in seedlings and flowers, and, to a lower extent, in roots, stems, and leaves.

Its subcellular location is the plastid. It is found in the chloroplast outer membrane. GTPase involved in protein precursor import into chloroplasts. Seems to recognize chloroplast-destined precursor proteins and regulate their presentation to the translocation channel through GTP hydrolysis. Binds GTP, GDP, XTP, but not ATP. Probably specialized in the import of nuclear encoded photosynthetic preproteins from the cytoplasm to the chloroplast, especially during early development stages. This Arabidopsis thaliana (Mouse-ear cress) protein is Translocase of chloroplast 33, chloroplastic (TOC33).